The following is a 289-amino-acid chain: Phosphatidylinositol:ceramide inositolphosphotransferase 3 (289 aa).

Helical transmembrane passes span 33-53, 77-97, 115-135, 169-189, and 199-219; these read LVLAGLVFQYIHGLAAHGVHY, AFFSETVFVTIFGSFILWTFH, VFVYLAASQSLRIITFFATQL, VIYGCGDLIFSSHTIFTLVFV, and RWIKHLAWLMAVIQSILIIAS. The active site involves His181. Residues His222 and Asp226 contribute to the active site. A helical transmembrane segment spans residues 223–243; that stretch reads YTVDIVVAWYTVNLVMFYVDS. The segment at 249-289 is disordered; that stretch reads AERSSGPSPTPLLPLSTKDSKNKSKEDHQRLLNENNVADDH. Positions 266–279 are enriched in basic and acidic residues; the sequence is KDSKNKSKEDHQRL. Residues 280 to 289 show a composition bias toward polar residues; the sequence is LNENNVADDH.

It belongs to the sphingomyelin synthase family. As to expression, mostly expressed in stems and flowers, and, to a lower extent, in leaves, roots and siliques.

It localises to the membrane. Its function is as follows. Catalyzes the transfer of the phosphorylinositol group from phosphatidylinositol (PI) to phytoceramide, an essential step in sphingolipid biosynthesis. This chain is Phosphatidylinositol:ceramide inositolphosphotransferase 3 (IPCS3), found in Arabidopsis thaliana (Mouse-ear cress).